The chain runs to 182 residues: ATP synthase subunit delta (182 aa).

It belongs to the ATPase delta chain family. F-type ATPases have 2 components, F(1) - the catalytic core - and F(0) - the membrane proton channel. F(1) has five subunits: alpha(3), beta(3), gamma(1), delta(1), epsilon(1). F(0) has three main subunits: a(1), b(2) and c(10-14). The alpha and beta chains form an alternating ring which encloses part of the gamma chain. F(1) is attached to F(0) by a central stalk formed by the gamma and epsilon chains, while a peripheral stalk is formed by the delta and b chains.

It is found in the cell membrane. F(1)F(0) ATP synthase produces ATP from ADP in the presence of a proton or sodium gradient. F-type ATPases consist of two structural domains, F(1) containing the extramembraneous catalytic core and F(0) containing the membrane proton channel, linked together by a central stalk and a peripheral stalk. During catalysis, ATP synthesis in the catalytic domain of F(1) is coupled via a rotary mechanism of the central stalk subunits to proton translocation. In terms of biological role, this protein is part of the stalk that links CF(0) to CF(1). It either transmits conformational changes from CF(0) to CF(1) or is implicated in proton conduction. In Lachnoclostridium phytofermentans (strain ATCC 700394 / DSM 18823 / ISDg) (Clostridium phytofermentans), this protein is ATP synthase subunit delta.